Reading from the N-terminus, the 226-residue chain is Cytidylate kinase (226 aa).

ATP is bound at residue 10 to 18 (GPASSGKST).

It belongs to the cytidylate kinase family. Type 1 subfamily.

The protein resides in the cytoplasm. It catalyses the reaction CMP + ATP = CDP + ADP. The catalysed reaction is dCMP + ATP = dCDP + ADP. This Streptococcus pyogenes serotype M5 (strain Manfredo) protein is Cytidylate kinase.